The chain runs to 235 residues: ATP-dependent dethiobiotin synthetase BioD (235 aa).

12–17 (GVGKTF) contacts ATP. Thr-16 contributes to the Mg(2+) binding site. Lys-37 is a catalytic residue. Residue Ser-41 participates in substrate binding. ATP-binding positions include Asp-51, 112-115 (EGAG), and 202-204 (PKL). Mg(2+) contacts are provided by Asp-51 and Glu-112.

Belongs to the dethiobiotin synthetase family. Homodimer. The cofactor is Mg(2+).

It localises to the cytoplasm. The catalysed reaction is (7R,8S)-7,8-diammoniononanoate + CO2 + ATP = (4R,5S)-dethiobiotin + ADP + phosphate + 3 H(+). It participates in cofactor biosynthesis; biotin biosynthesis; biotin from 7,8-diaminononanoate: step 1/2. Catalyzes a mechanistically unusual reaction, the ATP-dependent insertion of CO2 between the N7 and N8 nitrogen atoms of 7,8-diaminopelargonic acid (DAPA, also called 7,8-diammoniononanoate) to form a ureido ring. The polypeptide is ATP-dependent dethiobiotin synthetase BioD (Bacillus licheniformis (strain ATCC 14580 / DSM 13 / JCM 2505 / CCUG 7422 / NBRC 12200 / NCIMB 9375 / NCTC 10341 / NRRL NRS-1264 / Gibson 46)).